The following is a 309-amino-acid chain: MATSDSEFNSDLLLAHKLPETRYTYNERDVAIYALGIGACGQDAVDSDELKFVYHRNGQDLIQVLPTFASLFTLGSLTEGLDLPGFKYDPSLLLHGQQYIEIYRPLPSKASLINKVSLAGLQDKGKAAILELETRSYEEGSGELLCMNRTTVFLRGAGGFSNSSQPFSYKNYPSNQGLAVKIPQRQPLTVCEERTQPSQALLYRLSGDYNPLHSDPEFAKLAGFPRPILHGLCTLGFAIKAIIKCVCKGDPTAVKTISGRFLTTVFPGETLITEMWLEGLRVIYQTKVKERNKTVLAGYVDIRGLSSSL.

Substrate is bound by residues 95–96, Lys-124, 208–213, Gly-231, and Phe-261; these read HG and DYNPLH. One can recognise a MaoC-like domain in the interval 183–295; it reads PQRQPLTVCE…TKVKERNKTV (113 aa). Residues 307–309 carry the Microbody targeting signal motif; sequence SSL.

As to expression, ubiquitous.

It is found in the peroxisome. It catalyses the reaction a (3R)-3-hydroxyacyl-CoA = a (2E)-enoyl-CoA + H2O. The protein operates within lipid metabolism; fatty acid beta-oxidation. Functionally, bidirectional monofunctional enoyl-CoA hydratase 2 involved in the degradation of even cis-unsaturated fatty acids. Devoid of 3-hydroxyacyl-CoA dehydrogenase activity. In Arabidopsis thaliana (Mouse-ear cress), this protein is Enoyl-CoA hydratase 2, peroxisomal (ECH2).